The primary structure comprises 67 residues: UPF0337 protein msl9551 (67 aa).

The protein belongs to the UPF0337 (CsbD) family.

This Mesorhizobium japonicum (strain LMG 29417 / CECT 9101 / MAFF 303099) (Mesorhizobium loti (strain MAFF 303099)) protein is UPF0337 protein msl9551.